The following is a 166-amino-acid chain: uncharacterized protein (166 aa).

Composition is skewed to basic and acidic residues over residues 1–13, 21–112, and 119–137; these read MAEVSKKRCEHNS, KAND…KTKE, and DNVENKDKNEVYENIKEGG. The tract at residues 1 to 144 is disordered; sequence MAEVSKKRCE…EGGSKAWNKT (144 aa). Tandem repeats lie at residues 31–41, 42–52, 53–63, 64–74, 75–85, 86–96, 97–107, and 108–118. Residues 31–118 are 8 X 11 AA approximate tandem repeats of D-K-T-K-E-T-A-G/E-S-A-K; the sequence is DKTKETAGSA…KTKETAGNVR (88 aa).

This sequence belongs to the LEA type 1 family.

This is an uncharacterized protein from Encephalitozoon cuniculi (strain GB-M1) (Microsporidian parasite).